The sequence spans 327 residues: Ketol-acid reductoisomerase (NADP(+)) (327 aa).

The region spanning 2-182 (AKIYTDKDAS…GATRAGVIET (181 aa)) is the KARI N-terminal Rossmann domain. NADP(+) is bound by residues 25–28 (YGIQ), R48, S53, and 83–86 (DMEQ). H108 is an active-site residue. G134 contributes to the NADP(+) binding site. Positions 183–327 (TFAEETETDL…GAEMRKLLFG (145 aa)) constitute a KARI C-terminal knotted domain. Mg(2+) contacts are provided by D191, E195, E227, and E231. Position 252 (S252) interacts with substrate.

This sequence belongs to the ketol-acid reductoisomerase family. It depends on Mg(2+) as a cofactor.

The catalysed reaction is (2R)-2,3-dihydroxy-3-methylbutanoate + NADP(+) = (2S)-2-acetolactate + NADPH + H(+). The enzyme catalyses (2R,3R)-2,3-dihydroxy-3-methylpentanoate + NADP(+) = (S)-2-ethyl-2-hydroxy-3-oxobutanoate + NADPH + H(+). The protein operates within amino-acid biosynthesis; L-isoleucine biosynthesis; L-isoleucine from 2-oxobutanoate: step 2/4. Its pathway is amino-acid biosynthesis; L-valine biosynthesis; L-valine from pyruvate: step 2/4. In terms of biological role, involved in the biosynthesis of branched-chain amino acids (BCAA). Catalyzes an alkyl-migration followed by a ketol-acid reduction of (S)-2-acetolactate (S2AL) to yield (R)-2,3-dihydroxy-isovalerate. In the isomerase reaction, S2AL is rearranged via a Mg-dependent methyl migration to produce 3-hydroxy-3-methyl-2-ketobutyrate (HMKB). In the reductase reaction, this 2-ketoacid undergoes a metal-dependent reduction by NADPH to yield (R)-2,3-dihydroxy-isovalerate. This chain is Ketol-acid reductoisomerase (NADP(+)), found in Pyrobaculum neutrophilum (strain DSM 2338 / JCM 9278 / NBRC 100436 / V24Sta) (Thermoproteus neutrophilus).